A 254-amino-acid polypeptide reads, in one-letter code: Imidazole glycerol phosphate synthase subunit HisF (254 aa).

Catalysis depends on residues Asp11 and Asp130.

The protein belongs to the HisA/HisF family. As to quaternary structure, heterodimer of HisH and HisF.

It localises to the cytoplasm. The enzyme catalyses 5-[(5-phospho-1-deoxy-D-ribulos-1-ylimino)methylamino]-1-(5-phospho-beta-D-ribosyl)imidazole-4-carboxamide + L-glutamine = D-erythro-1-(imidazol-4-yl)glycerol 3-phosphate + 5-amino-1-(5-phospho-beta-D-ribosyl)imidazole-4-carboxamide + L-glutamate + H(+). It functions in the pathway amino-acid biosynthesis; L-histidine biosynthesis; L-histidine from 5-phospho-alpha-D-ribose 1-diphosphate: step 5/9. In terms of biological role, IGPS catalyzes the conversion of PRFAR and glutamine to IGP, AICAR and glutamate. The HisF subunit catalyzes the cyclization activity that produces IGP and AICAR from PRFAR using the ammonia provided by the HisH subunit. This is Imidazole glycerol phosphate synthase subunit HisF from Halorhodospira halophila (strain DSM 244 / SL1) (Ectothiorhodospira halophila (strain DSM 244 / SL1)).